We begin with the raw amino-acid sequence, 113 residues long: T cell receptor alpha variable 5 (113 aa).

The N-terminal stretch at 1–22 (MKTFAGFSFLFLWLQLDCMSRG) is a signal peptide. The Ig-like domain occupies 23-113 (EDVEQSLFLS…DSAIYFCAES (91 aa)). A glycan (N-linked (GlcNAc...) asparagine) is linked at Asn42. Cys43 and Cys110 are joined by a disulfide.

As to quaternary structure, alpha-beta TR is a heterodimer composed of an alpha and beta chain; disulfide-linked. The alpha-beta TR is associated with the transmembrane signaling CD3 coreceptor proteins to form the TR-CD3 (TcR or TCR). The assembly of alpha-beta TR heterodimers with CD3 occurs in the endoplasmic reticulum where a single alpha-beta TR heterodimer associates with one CD3D-CD3E heterodimer, one CD3G-CD3E heterodimer and one CD247 homodimer forming a stable octameric structure. CD3D-CD3E and CD3G-CD3E heterodimers preferentially associate with TR alpha and TR beta chains, respectively. The association of the CD247 homodimer is the last step of TcR assembly in the endoplasmic reticulum and is required for transport to the cell surface.

It is found in the cell membrane. Its function is as follows. V region of the variable domain of T cell receptor (TR) alpha chain that participates in the antigen recognition. Alpha-beta T cell receptors are antigen specific receptors which are essential to the immune response and are present on the cell surface of T lymphocytes. Recognize peptide-major histocompatibility (MH) (pMH) complexes that are displayed by antigen presenting cells (APC), a prerequisite for efficient T cell adaptive immunity against pathogens. Binding of alpha-beta TR to pMH complex initiates TR-CD3 clustering on the cell surface and intracellular activation of LCK that phosphorylates the ITAM motifs of CD3G, CD3D, CD3E and CD247 enabling the recruitment of ZAP70. In turn ZAP70 phosphorylates LAT, which recruits numerous signaling molecules to form the LAT signalosome. The LAT signalosome propagates signal branching to three major signaling pathways, the calcium, the mitogen-activated protein kinase (MAPK) kinase and the nuclear factor NF-kappa-B (NF-kB) pathways, leading to the mobilization of transcription factors that are critical for gene expression and essential for T cell growth and differentiation. The T cell repertoire is generated in the thymus, by V-(D)-J rearrangement. This repertoire is then shaped by intrathymic selection events to generate a peripheral T cell pool of self-MH restricted, non-autoaggressive T cells. Post-thymic interaction of alpha-beta TR with the pMH complexes shapes TR structural and functional avidity. The chain is T cell receptor alpha variable 5 from Homo sapiens (Human).